A 457-amino-acid chain; its full sequence is D-xylose transporter (457 aa).

The next 10 membrane-spanning stretches (helical) occupy residues 14–34 (ALGG…ILFI), 46–66 (GWVV…IGPS), 81–101 (IIFF…TLII), 104–124 (IILG…LAEL), 131–151 (GTVS…AYIT), 164–184 (WMLG…LILP), 244–264 (LIIG…TVLY), 281–301 (LLAH…AVAI), 309–329 (KIVN…SIGM), and 338–358 (AAII…ATWG). Gln-138 is a beta-D-xylose binding site. Beta-D-xylose is bound by residues 254–255 (QQ) and Asn-260. Residues Trp-362 and Asn-385 each contribute to the beta-D-xylose site. Transmembrane regions (helical) follow at residues 380–400 (FASV…PSLL) and 402–422 (FFGT…SIWF).

The protein belongs to the major facilitator superfamily. Sugar transporter (TC 2.A.1.1) family.

The protein localises to the cell membrane. Its activity is regulated as follows. Transport is inhibited by 6-deoxy-D-glucose. In terms of biological role, uptake of D-xylose across the boundary membrane with the concomitant transport of protons into the cell (symport system). Transport is driven by the proton motive force generated by either malolactic fermentation or by the metabolism of D-glucose. This is D-xylose transporter from Levilactobacillus brevis (Lactobacillus brevis).